We begin with the raw amino-acid sequence, 352 residues long: Light dependent period A (352 aa).

2 consecutive 4Fe-4S ferredoxin-type domains span residues R88–V119 and R121–W144. Positions 97, 101, 105, 109, 124, 127, 130, and 134 each coordinate [4Fe-4S] cluster.

Interacts with KaiA, CikA and SasA; the complexes do not follow circadian rhythms. [4Fe-4S] cluster serves as cofactor.

Its function is as follows. Functions in an input pathway to the Kai circadian clock. Probably senses the metabolic state of the cell via plastoquinone levels and informs the clock to modulate the photoperiod length. Deletion decreases the ability of the bacteria to modulate the circadian period in response to altered light regimes. Mild overexpression increases the photoperiod. Rapidly degraded in the presence of the quinone analog DBMIB (2,5-dibromo-3-methyl-6-isopropyl-p-benzoquinone), an artifical electron acceptor for photosystem II that reduces the plastoquinone pool. Partially resonsible for sensitivity of CikA to DBMIB, influences the levels of KaiA. This Synechococcus elongatus (strain ATCC 33912 / PCC 7942 / FACHB-805) (Anacystis nidulans R2) protein is Light dependent period A.